A 546-amino-acid chain; its full sequence is Cryptochrome DASH, chloroplastic/mitochondrial (546 aa).

The region spanning 4–151 is the Photolyase/cryptochrome alpha/beta domain; sequence TRVVIWFRND…TMERHWGSTL (148 aa). The interval 497–546 is disordered; sequence PRRDFTEMGSPPGPRRGGGGGGRGRGRPGGSTPNRGTKARVASVYDTVYG. Residues 511 to 525 show a composition bias toward gly residues; sequence RRGGGGGGRGRGRPG.

The protein belongs to the DNA photolyase class-1 family. It depends on FAD as a cofactor. Requires (6R)-5,10-methylene-5,6,7,8-tetrahydrofolate as cofactor.

The protein localises to the plastid. The protein resides in the chloroplast. It localises to the mitochondrion. Functionally, may have a photoreceptor function. Binds ss- and ds-DNA in a sequence non-specific manner, lacks photolyase activity. In Ostreococcus tauri, this protein is Cryptochrome DASH, chloroplastic/mitochondrial.